Reading from the N-terminus, the 276-residue chain is Octanoyltransferase LipM (276 aa).

The BPL/LPL catalytic domain occupies 31–246 (GKVPPTVRFY…GFASGLEVEL (216 aa)). The active-site Acyl-thioester intermediate is the C148.

Belongs to the octanoyltransferase LipM family. As to quaternary structure, monomer.

The enzyme catalyses octanoyl-[ACP] + L-lysyl-[protein] = N(6)-octanoyl-L-lysyl-[protein] + holo-[ACP] + H(+). It participates in protein modification; protein lipoylation via endogenous pathway; protein N(6)-(lipoyl)lysine from octanoyl-[acyl-carrier-protein]. In terms of biological role, catalyzes the transfer of endogenously produced octanoic acid from octanoyl-acyl-carrier-protein onto the lipoyl domain of GcvH, an intermediate carrier during protein lipoylation. The sequence is that of Octanoyltransferase LipM from Brevibacillus brevis (strain 47 / JCM 6285 / NBRC 100599).